Reading from the N-terminus, the 1428-residue chain is uncharacterized protein (1428 aa).

Disordered stretches follow at residues 1-53, 249-274, and 377-413; these read MAKK…AFKV, DIKH…KDSK, and KNGI…ETRA. Residues 16–33 show a composition bias toward polar residues; that stretch reads ATTSIPSRSASSPANKNQ. Residues 34 to 51 show a composition bias toward basic and acidic residues; it reads VKGEKNNKTQKVEPKNAF. Over residues 256-265 the composition is skewed to polar residues; sequence KETQPSNQVD. The Helicase ATP-binding domain occupies 641 to 811; that stretch reads IDAVNNSQLL…FEGSNLITIP (171 aa). Residue 654–661 participates in ATP binding; the sequence is GDTGCGKS. Positions 758–761 match the DEAH box motif; the sequence is DEVH. The 179-residue stretch at 886–1064 folds into the Helicase C-terminal domain; it reads LIVYLLKYIF…EVVLRVKMCQ (179 aa).

The protein belongs to the helicase family. SKI2 subfamily.

It is found in the cytoplasm. This is an uncharacterized protein from Schizosaccharomyces pombe (strain 972 / ATCC 24843) (Fission yeast).